An 864-amino-acid polypeptide reads, in one-letter code: DNA mismatch repair protein MutS (864 aa).

613–620 (GPNMGGKS) provides a ligand contact to ATP.

This sequence belongs to the DNA mismatch repair MutS family.

This protein is involved in the repair of mismatches in DNA. It is possible that it carries out the mismatch recognition step. This protein has a weak ATPase activity. The chain is DNA mismatch repair protein MutS from Actinobacillus pleuropneumoniae serotype 3 (strain JL03).